Reading from the N-terminus, the 1229-residue chain is Alpha,alpha-trehalose-phosphate synthase [UDP-forming] 2 (1229 aa).

Residues 196–233 form a disordered region; that stretch reads VSSDSEGEEAIHNVRSGTHTESESEEDPKAPRSGLATS. A compositionally biased stretch (basic and acidic residues) spans 213–225; sequence THTESESEEDPKA.

It in the N-terminal section; belongs to the glycosyltransferase 20 family. In the C-terminal section; belongs to the gob-1 trehalose phosphatase family.

It catalyses the reaction D-glucose 6-phosphate + UDP-alpha-D-glucose = alpha,alpha-trehalose 6-phosphate + UDP + H(+). In terms of biological role, catalyzes the production of trehalose from glucose-6-phosphate and UDP-alpha-D-glucose in a 2 step process. This is Alpha,alpha-trehalose-phosphate synthase [UDP-forming] 2 (tps-2) from Caenorhabditis elegans.